The chain runs to 32 residues: Alpha-conotoxin RgIA (32 aa).

Residues 1–19 constitute a propeptide that is removed on maturation; it reads SNKRKNAAMLDMIAQHAIR. Cystine bridges form between cysteine 21/cysteine 27 and cysteine 22/cysteine 31.

The protein belongs to the conotoxin A superfamily. In terms of processing, the disulfide bond CysI-CysIII is important for alpha-9-alpha-10 subtype inhibition, whereas the bond CysII-CysIV contributes to GABA(B) modulation. As to expression, expressed by the venom duct.

It localises to the secreted. Functionally, this toxin target two types of receptors, the nicotinic acetylcholine receptor (nAChR) and the G-protein-coupled receptor GABA(B). It specifically inhibits the alpha-9-alpha-10/CHRNA9-CHRNA10 nAChR, with preference for rat receptors. It interacts with the alpha-10(+)/alpha-9(-)interface of the receptor. It shows a two order of magnitude species difference potency for the rat versus human alpha-9-alpha-10 nAChR, due to the Thr-86 located in the alpha-9 nAChR subunit. This toxin also shows inhibition of high voltage-activated (HVA) calcium channels (Cav2.2) by acting on GABA(B) receptors (GABBR1 and GABBR2). In vivo, this toxin produces an acute antinociceptive effect in peripheral nerve-injured rats, which may be related to the inhibition of immune cell buildup at the site of nerve injury. In addition, when intramuscularly injected into rats following chronic constriction injury of the sciatic nerve, this toxin protects peripheral nervous tissues as well as prevents central maladaptive plasticity by inhibiting glial cell activation. In Conus regius (Crown cone), this protein is Alpha-conotoxin RgIA.